Reading from the N-terminus, the 367-residue chain is 3-dehydroquinate synthase (367 aa).

NAD(+) is bound by residues 69-74 (DGEAFK), 103-107 (GVIGD), 127-128 (TT), Lys140, and Lys149. Positions 182, 245, and 262 each coordinate Zn(2+).

The protein belongs to the sugar phosphate cyclases superfamily. Dehydroquinate synthase family. The cofactor is Co(2+). Zn(2+) is required as a cofactor. NAD(+) serves as cofactor.

It localises to the cytoplasm. It carries out the reaction 7-phospho-2-dehydro-3-deoxy-D-arabino-heptonate = 3-dehydroquinate + phosphate. Its pathway is metabolic intermediate biosynthesis; chorismate biosynthesis; chorismate from D-erythrose 4-phosphate and phosphoenolpyruvate: step 2/7. Its function is as follows. Catalyzes the conversion of 3-deoxy-D-arabino-heptulosonate 7-phosphate (DAHP) to dehydroquinate (DHQ). This is 3-dehydroquinate synthase from Pseudomonas syringae pv. syringae (strain B728a).